A 138-amino-acid chain; its full sequence is uncharacterized protein (138 aa).

Helical transmembrane passes span 8-28, 47-67, and 82-102; these read LIIQ…AFLP, FIIC…TIIV, and TLPV…IAFI.

The protein to U.parvum UU007, UU008 and UU041.

It is found in the cell membrane. This is an uncharacterized protein from Ureaplasma parvum serovar 3 (strain ATCC 700970).